The sequence spans 220 residues: Adenylate kinase (220 aa).

An ATP-binding site is contributed by 10 to 15; the sequence is GAGKGT. An NMP region spans residues 30-59; it reads STGDLFRANISQQTELGKLAKSYMDEGNLV. Residues Thr-31, Arg-36, 57–59, 85–88, and Gln-92 each bind AMP; these read NLV and GFPR. Positions 126–164 are LID; the sequence is GRRICRNDSAHVFHVSYKPPKQEGVCDVCGGELYQRDDD. ATP contacts are provided by residues Arg-127 and 137 to 138; that span reads VF. AMP is bound by residues Arg-161 and Arg-172. Gly-200 lines the ATP pocket.

It belongs to the adenylate kinase family. In terms of assembly, monomer.

It is found in the cytoplasm. The catalysed reaction is AMP + ATP = 2 ADP. Its pathway is purine metabolism; AMP biosynthesis via salvage pathway; AMP from ADP: step 1/1. Catalyzes the reversible transfer of the terminal phosphate group between ATP and AMP. Plays an important role in cellular energy homeostasis and in adenine nucleotide metabolism. In Streptomyces avermitilis (strain ATCC 31267 / DSM 46492 / JCM 5070 / NBRC 14893 / NCIMB 12804 / NRRL 8165 / MA-4680), this protein is Adenylate kinase.